The chain runs to 382 residues: Sphingoid long-chain base transporter RSB1 (382 aa).

The Extracellular portion of the chain corresponds to 1-34; the sequence is MSNATNNTLGSLLPQLEAAANSNSLYGGMVPNLR. N-linked (GlcNAc...) asparagine glycosylation is found at asparagine 3 and asparagine 6. Residues 35-55 form a helical membrane-spanning segment; that stretch reads FNITMIVIWGILLTIHVVQLL. Residues 56–57 are Cytoplasmic-facing; it reads MR. A helical membrane pass occupies residues 58-78; the sequence is QYWFSIAFICTGILEVLGFIG. At 79–90 the chain is on the extracellular side; it reads RTWSHSNVADMD. Residues 91-111 form a helical membrane-spanning segment; that stretch reads AFLLNMICLTIAPVFTMGGIY. The Cytoplasmic segment spans residues 112–135; that stretch reads YQLAKLIEVYGHRFSLLPSPMAYS. Residues 136–156 form a helical membrane-spanning segment; that stretch reads FIFICSDIVSLVVQAVGGGLC. Residues 157 to 171 lie on the Extracellular side of the membrane; it reads GVAVTDGTSTTTGNH. A helical membrane pass occupies residues 172–192; the sequence is VFIAGLAIQVASMAIFLMLWF. At 193 to 241 the chain is on the cytoplasmic side; sequence HFLFRIYISVRWEHINSRPISLSLLKISQTEVDYLYREKFHFLRLEPKR. The chain crosses the membrane as a helical span at residues 242–262; the sequence is WVFHYFNLAMTVAVLTIFTRC. The Extracellular portion of the chain corresponds to 263 to 281; it reads CYRLAELVVGWDGYLITHE. Residues 282-302 traverse the membrane as a helical segment; the sequence is WYFIILDALMMAIATVTLTIF. Topologically, residues 303–382 are cytoplasmic; that stretch reads HPGFAFKGRS…LFSSKKKAKL (80 aa).

The protein belongs to the lipid-translocating exporter (LTE) (TC 9.A.26.1) family.

The protein resides in the cell membrane. Functionally, catalyzes the ATP-dependent translocation of sphingoid long-chain bases (LCBs) from the cytoplasmic site toward the extracytoplasmic side of the membrane (flip-flop). Involved in the establishment of the functional lipid asymmetry of the plasma membrane. Regulates intracellular levels of LCBs, sphingolipid precursors that are growth inhibitory at increased levels. This chain is Sphingoid long-chain base transporter RSB1 (RSB1), found in Saccharomyces cerevisiae (strain AWRI1631) (Baker's yeast).